The primary structure comprises 293 residues: N(1)-aminopropylagmatine ureohydrolase (293 aa).

Mn(2+)-binding residues include histidine 105, aspartate 128, histidine 130, aspartate 132, aspartate 210, and aspartate 212.

The protein belongs to the arginase family. Mn(2+) is required as a cofactor.

The catalysed reaction is N(1)-(3-aminopropyl)agmatine + H2O = urea + spermidine. The protein operates within amine and polyamine biosynthesis; spermidine biosynthesis. In terms of biological role, involved in the biosynthesis of polyamines which are thought to support the growth of thermophilic microorganisms under high-temperature conditions. It seems that long-chain and branched-chain of polyamines effectively stabilize DNA and RNA, respectively. Catalyzes the decarboxylation of N1-(3-aminopropyl)agmatine to yield spermidine and urea. Does not act on agmatine. This Thermus thermophilus (strain ATCC BAA-163 / DSM 7039 / HB27) protein is N(1)-aminopropylagmatine ureohydrolase.